The sequence spans 237 residues: Segregation and condensation protein A (237 aa).

Belongs to the ScpA family. Component of a cohesin-like complex composed of ScpA, ScpB and the Smc homodimer, in which ScpA and ScpB bind to the head domain of Smc. The presence of the three proteins is required for the association of the complex with DNA.

It is found in the cytoplasm. Functionally, participates in chromosomal partition during cell division. May act via the formation of a condensin-like complex containing Smc and ScpB that pull DNA away from mid-cell into both cell halves. The sequence is that of Segregation and condensation protein A from Streptococcus thermophilus (strain ATCC BAA-250 / LMG 18311).